The chain runs to 243 residues: uncharacterized protein (243 aa).

Transmembrane regions (helical) follow at residues 38–58 (AYFL…VGIF), 99–119 (FGIA…FLGY), 143–163 (FYFS…FLVL), and 204–224 (AFAT…LGLF).

It is found in the cell membrane. This is an uncharacterized protein from Mycoplasma pneumoniae (strain ATCC 29342 / M129 / Subtype 1) (Mycoplasmoides pneumoniae).